Consider the following 468-residue polypeptide: MALWGGRFSGGPSEALAALSVSTQFDWRLARHDIAGSSAHAGVLHAAGLLDDDQYEGMMKALNALEEDVVSGRFVAQPEDEDVHTALERGLMERAGKDLGGRLRAGRSRNDQIIALLRRYLREEARSLAGELLGLAHVLSRQAEDVGDAVIAGRTHMQHAQPVLLAHQLLAHAWPLLRDVQRFRDLDARLDCSPYGSGALAGSSLGLDPEAVARDLGFSSSVPNSIDGTAARDVVAEFAFVAAQVGVDLSRLSEEIIIWNTREFGYVTLDDSFSTGSSIMPQKKNPDIAELARGKAGRLIGDLAGLMASLKGLPLAYARDLQEDKEPVFDQIDQLHLLLPAITGMVDTAVFNTDRMAEMAGQGFSLATDVAEWLVRQGVPFRVAHELSGACVRGAESQNKELADLTDQELIAIDPRLTPQVREVMTVQGSVRSRAGRGGTAPERVAEQITELREAIAGLRSFGEAETR.

Belongs to the lyase 1 family. Argininosuccinate lyase subfamily.

The protein localises to the cytoplasm. The enzyme catalyses 2-(N(omega)-L-arginino)succinate = fumarate + L-arginine. Its pathway is amino-acid biosynthesis; L-arginine biosynthesis; L-arginine from L-ornithine and carbamoyl phosphate: step 3/3. The chain is Argininosuccinate lyase from Cutibacterium acnes (strain DSM 16379 / KPA171202) (Propionibacterium acnes).